The following is a 683-amino-acid chain: Tripartite terminase subunit 3 (683 aa).

A Walker A motif motif is present at residues 217-224 (IPRRHGKT). A Walker B motif motif is present at residues 312–317 (LLYIDE). The active-site For ATPase activity is the Glu-317. Catalysis depends on for nuclease activity residues Asp-472, Glu-546, and Asp-658.

This sequence belongs to the herpesviridae TRM3 protein family. In terms of assembly, interacts with the terminase subunits TRM1 and TRM2. Interacts with portal protein.

It localises to the host nucleus. Functionally, component of the molecular motor that translocates viral genomic DNA in empty capsid during DNA packaging. Forms a tripartite terminase complex together with TRM1 and TRM2 in the host cytoplasm. Once the complex reaches the host nucleus, it interacts with the capsid portal vertex. This portal forms a ring in which genomic DNA is translocated into the capsid. TRM3 carries an RNase H-like nuclease activity that plays an important role for the cleavage of concatemeric viral DNA into unit length genomes. The sequence is that of Tripartite terminase subunit 3 from Saimiri sciureus (Common squirrel monkey).